Consider the following 347-residue polypeptide: Ataxin-7-like protein 3 (347 aa).

The SGF11-type zinc-finger motif lies at cysteine 84 to cysteine 105. Positions alanine 116–asparagine 125 are enriched in low complexity. Residues alanine 116 to lysine 184 form a disordered region. A phosphoserine mark is found at serine 129 and serine 131. Positions aspartate 132–aspartate 141 are enriched in acidic residues. Positions leucine 196 to threonine 263 constitute an SCA7 domain. Residues aspartate 275–serine 288 show a composition bias toward low complexity. A disordered region spans residues aspartate 275 to asparagine 347. Phosphoserine occurs at positions 278, 281, and 326.

It belongs to the SGF11 family. In terms of assembly, component of some SAGA transcription coactivator-HAT complexes, at least composed of ATXN7, ATXN7L3, ENY2, GCN5L2, SUPT3H, TAF10, TRRAP and USP22. Within the SAGA complex, ENY2, ATXN7, ATXN7L3, and USP22 form an additional subcomplex of SAGA called the DUB module (deubiquitination module). Interacts directly with ENY2 and USP22.

It localises to the nucleus. Its function is as follows. Component of the transcription regulatory histone acetylation (HAT) complex SAGA, a multiprotein complex that activates transcription by remodeling chromatin and mediating histone acetylation and deubiquitination. Within the SAGA complex, participates in a subcomplex that specifically deubiquitinates both histones H2A and H2B. The SAGA complex is recruited to specific gene promoters by activators such as MYC, where it is required for transcription. Required for nuclear receptor-mediated transactivation. Within the complex, it is required to recruit USP22 and ENY2 into the SAGA complex. Regulates H2B monoubiquitination (H2Bub1) levels. Affects subcellular distribution of ENY2, USP22 and ATXN7L3B. The sequence is that of Ataxin-7-like protein 3 (Atxn7l3) from Mus musculus (Mouse).